We begin with the raw amino-acid sequence, 291 residues long: Ribosomal RNA small subunit methyltransferase A (291 aa).

Positions 37, 39, 64, 85, 110, and 131 each coordinate S-adenosyl-L-methionine.

Belongs to the class I-like SAM-binding methyltransferase superfamily. rRNA adenine N(6)-methyltransferase family. RsmA subfamily.

It localises to the cytoplasm. The catalysed reaction is adenosine(1518)/adenosine(1519) in 16S rRNA + 4 S-adenosyl-L-methionine = N(6)-dimethyladenosine(1518)/N(6)-dimethyladenosine(1519) in 16S rRNA + 4 S-adenosyl-L-homocysteine + 4 H(+). Functionally, specifically dimethylates two adjacent adenosines (A1518 and A1519) in the loop of a conserved hairpin near the 3'-end of 16S rRNA in the 30S particle. May play a critical role in biogenesis of 30S subunits. This is Ribosomal RNA small subunit methyltransferase A from Dehalococcoides mccartyi (strain ATCC BAA-2266 / KCTC 15142 / 195) (Dehalococcoides ethenogenes (strain 195)).